Here is a 288-residue protein sequence, read N- to C-terminus: Probable aquaporin PIP2-2 (288 aa).

A disordered region spans residues 1–21; that stretch reads MAKDIEASAPEGGEFSAKDYT. A run of 2 helical transmembrane segments spans residues 42-62 and 81-101; these read AVIA…ATVI and GVGI…LVYC. Residues 111-113 carry the NPA 1 motif; the sequence is NPA. 3 consecutive transmembrane segments (helical) span residues 130 to 150, 172 to 192, and 204 to 224; these read VLYI…VKGF, GTGL…VFSA, and IPVL…LATI. The short motif at 232-234 is the NPA 2 element; that stretch reads NPA. The helical transmembrane segment at 254–274 threads the bilayer; that stretch reads IFWVGPLIGAAIAAAYHQYVL.

It belongs to the MIP/aquaporin (TC 1.A.8) family. PIP (TC 1.A.8.11) subfamily. As to expression, expressed in roots, leaves and anthers.

Its subcellular location is the cell membrane. Aquaporins facilitate the transport of water and small neutral solutes across cell membranes. In Oryza sativa subsp. japonica (Rice), this protein is Probable aquaporin PIP2-2 (PIP2-2).